The chain runs to 132 residues: Agouti-signaling protein (132 aa).

The signal sequence occupies residues 1 to 22 (MDVTRLLLATLLVFLCFFTAYS). N-linked (GlcNAc...) asparagine glycosylation is present at N39. Positions 57–88 (KKSKQTSRKEAEKKRSSKKEASMKKVARPRTP) are disordered. Positions 63-79 (SRKEAEKKRSSKKEASM) are enriched in basic and acidic residues. Intrachain disulfides connect C93/C108, C100/C114, C107/C125, C111/C132, and C116/C123. The Agouti domain maps to 93-132 (CVATRDSCKPPAPACCDPCASCQCRFFRSACSCRVLSLNC).

It is found in the secreted. Involved in the regulation of melanogenesis. The binding of ASP to MC1R precludes alpha-MSH initiated signaling and thus blocks production of cAMP, leading to a down-regulation of eumelanogenesis (brown/black pigment) and thus increasing synthesis of pheomelanin (yellow/red pigment). The polypeptide is Agouti-signaling protein (ASIP) (Macaca assamensis (Assam macaque)).